Consider the following 193-residue polypeptide: 3-isopropylmalate dehydratase small subunit (193 aa).

Belongs to the LeuD family. LeuD type 1 subfamily. Heterodimer of LeuC and LeuD.

The enzyme catalyses (2R,3S)-3-isopropylmalate = (2S)-2-isopropylmalate. It functions in the pathway amino-acid biosynthesis; L-leucine biosynthesis; L-leucine from 3-methyl-2-oxobutanoate: step 2/4. In terms of biological role, catalyzes the isomerization between 2-isopropylmalate and 3-isopropylmalate, via the formation of 2-isopropylmaleate. The polypeptide is 3-isopropylmalate dehydratase small subunit (Bacillus cereus (strain ATCC 10987 / NRS 248)).